A 171-amino-acid chain; its full sequence is Crossover junction endodeoxyribonuclease RuvC (171 aa).

Catalysis depends on residues D7, E66, and D138. Mg(2+)-binding residues include D7, E66, and D138.

The protein belongs to the RuvC family. In terms of assembly, homodimer which binds Holliday junction (HJ) DNA. The HJ becomes 2-fold symmetrical on binding to RuvC with unstacked arms; it has a different conformation from HJ DNA in complex with RuvA. In the full resolvosome a probable DNA-RuvA(4)-RuvB(12)-RuvC(2) complex forms which resolves the HJ. Mg(2+) is required as a cofactor.

It is found in the cytoplasm. The catalysed reaction is Endonucleolytic cleavage at a junction such as a reciprocal single-stranded crossover between two homologous DNA duplexes (Holliday junction).. Its function is as follows. The RuvA-RuvB-RuvC complex processes Holliday junction (HJ) DNA during genetic recombination and DNA repair. Endonuclease that resolves HJ intermediates. Cleaves cruciform DNA by making single-stranded nicks across the HJ at symmetrical positions within the homologous arms, yielding a 5'-phosphate and a 3'-hydroxyl group; requires a central core of homology in the junction. The consensus cleavage sequence is 5'-(A/T)TT(C/G)-3'. Cleavage occurs on the 3'-side of the TT dinucleotide at the point of strand exchange. HJ branch migration catalyzed by RuvA-RuvB allows RuvC to scan DNA until it finds its consensus sequence, where it cleaves and resolves the cruciform DNA. The chain is Crossover junction endodeoxyribonuclease RuvC from Francisella tularensis subsp. mediasiatica (strain FSC147).